A 251-amino-acid polypeptide reads, in one-letter code: 4-hydroxy-tetrahydrodipicolinate reductase (251 aa).

Residues 8–13 (GAKGRM), 76–78 (GTT), and 106–109 (APNF) each bind NAD(+). The active-site Proton donor/acceptor is the H136. H137 contributes to the (S)-2,3,4,5-tetrahydrodipicolinate binding site. The active-site Proton donor is the K140. Position 146–147 (146–147 (GT)) interacts with (S)-2,3,4,5-tetrahydrodipicolinate.

The protein belongs to the DapB family.

It localises to the cytoplasm. The catalysed reaction is (S)-2,3,4,5-tetrahydrodipicolinate + NAD(+) + H2O = (2S,4S)-4-hydroxy-2,3,4,5-tetrahydrodipicolinate + NADH + H(+). It catalyses the reaction (S)-2,3,4,5-tetrahydrodipicolinate + NADP(+) + H2O = (2S,4S)-4-hydroxy-2,3,4,5-tetrahydrodipicolinate + NADPH + H(+). The protein operates within amino-acid biosynthesis; L-lysine biosynthesis via DAP pathway; (S)-tetrahydrodipicolinate from L-aspartate: step 4/4. In terms of biological role, catalyzes the conversion of 4-hydroxy-tetrahydrodipicolinate (HTPA) to tetrahydrodipicolinate. The sequence is that of 4-hydroxy-tetrahydrodipicolinate reductase from Bifidobacterium longum (strain NCC 2705).